A 118-amino-acid chain; its full sequence is Protein MGF 110-6L (118 aa).

An N-terminal signal peptide occupies residues 1-18 (MLVTFLGILGLLASQVSS). The Prevents secretion from ER signature appears at 115–118 (KDEL).

The protein belongs to the asfivirus MGF 110 family. Post-translationally, N-glycosylated.

The protein resides in the host endoplasmic reticulum lumen. In terms of biological role, plays a role in virus cell tropism, and may be required for efficient virus replication in macrophages. The chain is Protein MGF 110-6L from Ornithodoros (relapsing fever ticks).